The primary structure comprises 651 residues: Acetyl-coenzyme A synthetase (651 aa).

Residues 189-192 (RGGK), threonine 311, and asparagine 335 contribute to the CoA site. Residues 387–389 (GEP), 411–416 (DTWWQT), aspartate 500, and arginine 515 each bind ATP. Residue serine 523 coordinates CoA. Residue arginine 526 participates in ATP binding. Mg(2+)-binding residues include valine 537, histidine 539, and valine 542. CoA is bound at residue arginine 586. The residue at position 611 (lysine 611) is an N6-acetyllysine.

The protein belongs to the ATP-dependent AMP-binding enzyme family. It depends on Mg(2+) as a cofactor. Acetylated. Deacetylation by the SIR2-homolog deacetylase activates the enzyme.

It carries out the reaction acetate + ATP + CoA = acetyl-CoA + AMP + diphosphate. Its function is as follows. Catalyzes the conversion of acetate into acetyl-CoA (AcCoA), an essential intermediate at the junction of anabolic and catabolic pathways. AcsA undergoes a two-step reaction. In the first half reaction, AcsA combines acetate with ATP to form acetyl-adenylate (AcAMP) intermediate. In the second half reaction, it can then transfer the acetyl group from AcAMP to the sulfhydryl group of CoA, forming the product AcCoA. This is Acetyl-coenzyme A synthetase from Brucella anthropi (strain ATCC 49188 / DSM 6882 / CCUG 24695 / JCM 21032 / LMG 3331 / NBRC 15819 / NCTC 12168 / Alc 37) (Ochrobactrum anthropi).